The following is a 450-amino-acid chain: MSLLQFSGLFVVWLLCTLFIATLTWFEFRRVRFNFNVFFSLLFLLTFFFGFPLTSVLVFRFDVGVAPPEILLQALLSAGCFYAVYYVTYKTRLRKRVADAPRRPLFTMNRVETNLTWVILMGIALVSVGIFFMHNGFLLFRLNSYSQIFSSEVSGVALKRFFYFFIPAMLVVYFLRQDSKAWLFFLVSTVAFGLLTYMIVGGTRANIIIAFAIFLFIGIIRGWISLWMLAAAGVLGIVGMFWLALKRYGMNVSGDEAFYTFLYLTRDTFSPWENLALLLQNYDNIDFQGLAPIVRDFYVFIPSWLWPGRPSMVLNSANYFTWEVLNNHSGLAISPTLIGSLVVMGGALFIPLGAIVVGLIIKWFDWLYELGNRETNRYKAAILHSFCFGAIFNMIVLAREGLDSFVSRVVFFIVVFGACLMIAKLLYWLFESAGLIHKRTKSSLRTQVEG.

11 helical membrane-spanning segments follow: residues 6-26, 37-57, 63-83, 118-138, 155-175, 181-201, 207-227, 228-248, 341-361, 378-398, and 410-430; these read FSGL…LTWF, VFFS…TSVL, VGVA…CFYA, VILM…NGFL, GVAL…VYFL, AWLF…MIVG, IIIA…ISLW, MLAA…LKRY, LVVM…GLII, YKAA…IVLA, and VFFI…YWLF.

It belongs to the WzyE family. As to quaternary structure, probably part of a complex composed of WzxE, WzyE and WzzE.

It localises to the cell inner membrane. Its pathway is bacterial outer membrane biogenesis; enterobacterial common antigen biosynthesis. Probably involved in the polymerization of enterobacterial common antigen (ECA) trisaccharide repeat units. In Escherichia coli O127:H6 (strain E2348/69 / EPEC), this protein is Probable ECA polymerase.